We begin with the raw amino-acid sequence, 91 residues long: DNA-directed RNA polymerase subunit omega (91 aa).

The protein belongs to the RNA polymerase subunit omega family. In terms of assembly, the RNAP catalytic core consists of 2 alpha, 1 beta, 1 beta' and 1 omega subunit. When a sigma factor is associated with the core the holoenzyme is formed, which can initiate transcription.

It carries out the reaction RNA(n) + a ribonucleoside 5'-triphosphate = RNA(n+1) + diphosphate. Functionally, promotes RNA polymerase assembly. Latches the N- and C-terminal regions of the beta' subunit thereby facilitating its interaction with the beta and alpha subunits. This chain is DNA-directed RNA polymerase subunit omega, found in Yersinia enterocolitica serotype O:8 / biotype 1B (strain NCTC 13174 / 8081).